A 445-amino-acid chain; its full sequence is Gamma conglutin 2 (445 aa).

The first 33 residues, 1–33 (MAQNMAPIFHFIAISLSCSFLFVLSSSQDSQSL), serve as a signal peptide directing secretion. In terms of domain architecture, Peptidase A1 spans 60-425 (HWANIHKRTP…DFAKSRVEFN (366 aa)). 5 disulfide bridges follow: C88–C178, C102–C115, C107–C133, C118–C128, and C346–C387. The N-linked (GlcNAc...) asparagine glycan is linked to N130.

This sequence belongs to the peptidase A1 family. Two-subunit monomeric unit made of alpha and beta subunits coupled by disulfide bonds (at pH 4.5 and under non-reducing conditions). Can also form oligomers including dimer, tetramer and cyclic hexamer (trimer of dimers) (at pH &gt; 5.5). Component of globulins complexes which accumulate in seeds. Interacts with flavonoids (e.g. apigenin glucosides) present in globulins complexes. Glycosylated on alpha chain.

Its subcellular location is the secreted. The protein localises to the extracellular space. Sulfur-rich seed storage protein that remains undegraded at germination. The sequence is that of Gamma conglutin 2 from Lupinus angustifolius (Narrow-leaved blue lupine).